Consider the following 930-residue polypeptide: Isoleucine--tRNA ligase (930 aa).

The short motif at 57-67 is the 'HIGH' region element; that stretch reads PYANGNIHVGH. E554 contacts L-isoleucyl-5'-AMP. Residues 595–599 carry the 'KMSKS' region motif; the sequence is KMSKS. Position 598 (K598) interacts with ATP. Zn(2+)-binding residues include C888, C891, C908, and C911.

Belongs to the class-I aminoacyl-tRNA synthetase family. IleS type 1 subfamily. In terms of assembly, monomer. Zn(2+) serves as cofactor.

It is found in the cytoplasm. The enzyme catalyses tRNA(Ile) + L-isoleucine + ATP = L-isoleucyl-tRNA(Ile) + AMP + diphosphate. Its function is as follows. Catalyzes the attachment of isoleucine to tRNA(Ile). As IleRS can inadvertently accommodate and process structurally similar amino acids such as valine, to avoid such errors it has two additional distinct tRNA(Ile)-dependent editing activities. One activity is designated as 'pretransfer' editing and involves the hydrolysis of activated Val-AMP. The other activity is designated 'posttransfer' editing and involves deacylation of mischarged Val-tRNA(Ile). This Streptococcus pneumoniae (strain Hungary19A-6) protein is Isoleucine--tRNA ligase.